Consider the following 221-residue polypeptide: Protein-L-isoaspartate O-methyltransferase (221 aa).

S57 is a catalytic residue.

This sequence belongs to the methyltransferase superfamily. L-isoaspartyl/D-aspartyl protein methyltransferase family.

The protein resides in the cytoplasm. It catalyses the reaction [protein]-L-isoaspartate + S-adenosyl-L-methionine = [protein]-L-isoaspartate alpha-methyl ester + S-adenosyl-L-homocysteine. Its function is as follows. Catalyzes the methyl esterification of L-isoaspartyl residues in peptides and proteins that result from spontaneous decomposition of normal L-aspartyl and L-asparaginyl residues. It plays a role in the repair and/or degradation of damaged proteins. The polypeptide is Protein-L-isoaspartate O-methyltransferase (Korarchaeum cryptofilum (strain OPF8)).